A 679-amino-acid chain; its full sequence is Kelch-like protein diablo (679 aa).

Over residues 1 to 48 (MGDLPGGGGGAAGGAGAAGGGGGGGNGAAGSSSSGGGASGSGGGGPGS) the composition is skewed to gly residues. The interval 1–84 (MGDLPGGGGG…RLSHTSEKHP (84 aa)) is disordered. One can recognise a BTB domain in the interval 101–168 (CDVVLNVGGR…CYTAHIIVEE (68 aa)). The 103-residue stretch at 203–305 (CLGIRAFADT…SPKFLVGTVG (103 aa)) folds into the BACK domain. Kelch repeat units follow at residues 352–398 (VLFA…VLND), 400–446 (LYAV…VLDG), 447–493 (FLYA…VLGG), 495–540 (LYAI…VFNN), 542–587 (IYAV…VVNG), and 588–634 (QLYA…VMRA). Positions 643–679 (CDNNSSNNNNNNYNLKHQQQQPQQQQQQQQQQTQQQL) are disordered. The segment covering 645 to 679 (NNSSNNNNNNYNLKHQQQQPQQQQQQQQQQTQQQL) has biased composition (low complexity).

It participates in protein modification; protein ubiquitination. In terms of biological role, probable substrate-specific adapter of an E3 ubiquitin-protein ligase complex which mediates the ubiquitination and subsequent proteasomal degradation of target proteins. May have a role in synapse differentiation and growth. This is Kelch-like protein diablo from Drosophila willistoni (Fruit fly).